The primary structure comprises 560 residues: Arginine--tRNA ligase (560 aa).

The 'HIGH' region motif lies at 122–132 (ANPNGPLHVGH).

Belongs to the class-I aminoacyl-tRNA synthetase family.

Its subcellular location is the cytoplasm. It catalyses the reaction tRNA(Arg) + L-arginine + ATP = L-arginyl-tRNA(Arg) + AMP + diphosphate. This chain is Arginine--tRNA ligase, found in Methanosphaera stadtmanae (strain ATCC 43021 / DSM 3091 / JCM 11832 / MCB-3).